A 350-amino-acid polypeptide reads, in one-letter code: Methionine import ATP-binding protein MetN (350 aa).

The 240-residue stretch at 2 to 241 folds into the ABC transporter domain; that stretch reads IQIKNLKKEY…PQAPVTRSFV (240 aa). 38-45 is a binding site for ATP; it reads GHSGAGKS.

Belongs to the ABC transporter superfamily. Methionine importer (TC 3.A.1.24) family. As to quaternary structure, the complex is composed of two ATP-binding proteins (MetN), two transmembrane proteins (MetI) and a solute-binding protein (MetQ).

Its subcellular location is the cell inner membrane. It carries out the reaction L-methionine(out) + ATP + H2O = L-methionine(in) + ADP + phosphate + H(+). The catalysed reaction is D-methionine(out) + ATP + H2O = D-methionine(in) + ADP + phosphate + H(+). In terms of biological role, part of the ABC transporter complex MetNIQ involved in methionine import. Responsible for energy coupling to the transport system. The chain is Methionine import ATP-binding protein MetN from Francisella tularensis subsp. tularensis (strain FSC 198).